Here is a 199-residue protein sequence, read N- to C-terminus: MAEIILNVEIRDRAGTGGSRETRRQGKVPGVLYGGPLAPVNIAVKGNEFRKALHTGKLLGHLVTLQHGDEKQSVIAKAVQFHPVTDEPLHFDLYRVDEHQLIKIEIPVHFKNHDISVGLKKGGTLEIIRHTVELACPADKIPEELVIDLASHDIGDTIRISEIKLPEGVRPAMERDFVIANLKASAASQSTEGDTTAEA.

Belongs to the bacterial ribosomal protein bL25 family. CTC subfamily. In terms of assembly, part of the 50S ribosomal subunit; part of the 5S rRNA/L5/L18/L25 subcomplex. Contacts the 5S rRNA. Binds to the 5S rRNA independently of L5 and L18.

This is one of the proteins that binds to the 5S RNA in the ribosome where it forms part of the central protuberance. This is Large ribosomal subunit protein bL25 from Caulobacter sp. (strain K31).